The following is a 500-amino-acid chain: MTNATTLTDLTIAEARDAMAKGAFTPLELTNAHLARMEAGRGLNAFITETPDLARMQAERSGERLRAGKAGPMEGIPIGIKDLFCTEGVRTTAGSKILDGFVPPYESTVSANLAKAGAVMLGKTNLDEFAMGSSNKTSASGPVINPWTRTDDDEQLVPGGSSGGSAAAVAGRLAMAATGTDTGGSIRQPAAFCGLVGLKPTYGRCSRWGVVAFASSLDQAGPMTRTVRDAAIMLKAMAGHDPMDGTSAPVEVPNFEAVLSGDIRGLRVGLPRQYRPEGLDPEIAALWDRGAEMLKDAGATLVEVDLPHTKYALATYYIVAPAEASSNLARYDGVRYGLRVPGETLDEMYCKTRAAGFGEEVRRRVLIGTYALSAGYYDAYYLKAQKVRALIAQDFKTAFETVDVLLTPTTPSAAFGLNETIDDPITMYLNDVFTVPTSLAGLPGLSVPVGLSSRGLPLGLQLVGRYFDEETVLNAGLALERASAFTQKPAFLTGALEGQI.

Active-site charge relay system residues include K81 and S161. The Acyl-ester intermediate role is filled by S185.

It belongs to the amidase family. GatA subfamily. In terms of assembly, heterotrimer of A, B and C subunits.

The enzyme catalyses L-glutamyl-tRNA(Gln) + L-glutamine + ATP + H2O = L-glutaminyl-tRNA(Gln) + L-glutamate + ADP + phosphate + H(+). Allows the formation of correctly charged Gln-tRNA(Gln) through the transamidation of misacylated Glu-tRNA(Gln) in organisms which lack glutaminyl-tRNA synthetase. The reaction takes place in the presence of glutamine and ATP through an activated gamma-phospho-Glu-tRNA(Gln). The protein is Glutamyl-tRNA(Gln) amidotransferase subunit A of Rhodospirillum rubrum (strain ATCC 11170 / ATH 1.1.1 / DSM 467 / LMG 4362 / NCIMB 8255 / S1).